Consider the following 221-residue polypeptide: MIEDETKGENKMNRGRLILTNIIGLIVVLAIIAGGAYYYYQSTNYVKTDEAKVAGDMAAITAPAAGKVSDWDLDEGKTVKKGDTVAKIKGEQTVDVKSIMDGTIVKNEVKNGQTVQAGTTIAQTIDMDNLYITANIKETDIADIEVGNSVDVVVDGDPDTTFDGTVEEIGYATNSTFDMLPSTNSSGNYTKVTQKVPVKISIKNPSDKVLPGMNASVKISE.

Residues 17 to 37 form a helical membrane-spanning segment; sequence LILTNIIGLIVVLAIIAGGAY.

It belongs to the membrane fusion protein (MFP) (TC 8.A.1) family.

It localises to the cell membrane. The polypeptide is Putative efflux system component YhbJ (yhbJ) (Bacillus subtilis (strain 168)).